A 419-amino-acid chain; its full sequence is Tyrosine--tRNA ligase (419 aa).

An L-tyrosine-binding site is contributed by Y36. A 'HIGH' region motif is present at residues 41–50 (PTGDSMHIGH). Y168 and Q172 together coordinate L-tyrosine. Positions 230–234 (KFGKT) match the 'KMSKS' region motif. K233 lines the ATP pocket. The S4 RNA-binding domain occupies 352-419 (KNIVDFLVDA…KKKYFLARVK (68 aa)).

This sequence belongs to the class-I aminoacyl-tRNA synthetase family. TyrS type 1 subfamily. In terms of assembly, homodimer.

It localises to the cytoplasm. It catalyses the reaction tRNA(Tyr) + L-tyrosine + ATP = L-tyrosyl-tRNA(Tyr) + AMP + diphosphate + H(+). Its function is as follows. Catalyzes the attachment of tyrosine to tRNA(Tyr) in a two-step reaction: tyrosine is first activated by ATP to form Tyr-AMP and then transferred to the acceptor end of tRNA(Tyr). The protein is Tyrosine--tRNA ligase of Latilactobacillus sakei subsp. sakei (strain 23K) (Lactobacillus sakei subsp. sakei).